A 185-amino-acid chain; its full sequence is Capsid protein (185 aa).

Residues 136–185 (NAPILSTLPETTVVRRRDRGRSPRRRTPSPRRRRSQSPRRRRSQSRESQC) are disordered. A compositionally biased stretch (basic residues) spans 149-178 (VRRRDRGRSPRRRTPSPRRRRSQSPRRRRS). 3 positions are modified to phosphoserine; by host: Ser157, Ser164, and Ser172. Residues 157–163 (SPRRRTP) form a 1; half-length repeat. The segment at 157–179 (SPRRRTPSPRRRRSQSPRRRRSQ) is 3 X 8 AA repeats of S-P-R-R-R-[PR]-S-Q. A Bipartite nuclear localization signal motif is present at residues 160–177 (RRTPSPRRRRSQSPRRRR). 2 tandem repeats follow at residues 164-171 (SPRRRRSQ) and 172-179 (SPRRRRSQ). Residues 179 to 185 (QSRESQC) are RNA binding.

Belongs to the orthohepadnavirus core antigen family. As to quaternary structure, homodimerizes, then multimerizes. Interacts with cytosol exposed regions of viral L glycoprotein present in the reticulum-to-Golgi compartment. Interacts with human FLNB. Phosphorylated form interacts with host importin alpha; this interaction depends on the exposure of the NLS, which itself depends upon genome maturation and/or phosphorylation of the capsid protein. Interacts with host NUP153. Post-translationally, phosphorylated by host SRPK1, SRPK2, and maybe protein kinase C or GAPDH. Phosphorylation is critical for pregenomic RNA packaging. Protein kinase C phosphorylation is stimulated by HBx protein and may play a role in transport of the viral genome to the nucleus at the late step during the viral replication cycle.

It localises to the virion. The protein resides in the host cytoplasm. Self assembles to form an icosahedral capsid. Most capsids appear to be large particles with an icosahedral symmetry of T=4 and consist of 240 copies of capsid protein, though a fraction forms smaller T=3 particles consisting of 180 capsid proteins. Entering capsids are transported along microtubules to the nucleus. Phosphorylation of the capsid is thought to induce exposure of nuclear localization signal in the C-terminal portion of the capsid protein that allows binding to the nuclear pore complex via the importin (karyopherin-) alpha and beta. Capsids are imported in intact form through the nuclear pore into the nuclear basket, where it probably binds NUP153. Only capsids that contain the mature viral genome can release the viral DNA and capsid protein into the nucleoplasm. Immature capsids get stuck in the basket. Capsids encapsulate the pre-genomic RNA and the P protein. Pre-genomic RNA is reverse-transcribed into DNA while the capsid is still in the cytoplasm. The capsid can then either be directed to the nucleus, providing more genomes for transcription, or bud through the endoplasmic reticulum to provide new virions. This chain is Capsid protein, found in Hepatitis B virus genotype A1 subtype adw (isolate Philippines/pFDW294/1988) (HBV-A).